The primary structure comprises 303 residues: Haloalkane dehalogenase (303 aa).

The AB hydrolase-1 domain occupies P48 to V192. The Nucleophile role is filled by D123. D250 (proton donor) is an active-site residue. Residue H280 is the Proton acceptor of the active site.

This sequence belongs to the haloalkane dehalogenase family. Type 1 subfamily. In terms of assembly, monomer.

It carries out the reaction 1-haloalkane + H2O = a halide anion + a primary alcohol + H(+). Functionally, catalyzes hydrolytic cleavage of carbon-halogen bonds in halogenated aliphatic compounds, leading to the formation of the corresponding primary alcohols, halide ions and protons. This chain is Haloalkane dehalogenase, found in Psychrobacter cryohalolentis (strain ATCC BAA-1226 / DSM 17306 / VKM B-2378 / K5).